The sequence spans 411 residues: Heparan-sulfate 6-O-sulfotransferase 1 (411 aa).

Residues 11–17 are Cytoplasmic-facing; sequence MVERASK. A helical; Signal-anchor for type II membrane protein transmembrane segment spans residues 18-37; sequence FVLVVAGSVCFMLILYQYAG. Residues 38–411 lie on the Lumenal side of the membrane; that stretch reads PGLSLGAPGG…DYMSHIIEKW (374 aa). A 3'-phosphoadenylyl sulfate-binding site is contributed by 93–101; it reads HIQKTGGTT. Residues 123 to 124, Arg140, Trp145, and His150 contribute to the substrate site; that span reads KK. Residue His150 is the Proton acceptor of the active site. 3'-phosphoadenylyl sulfate-binding residues include Arg185 and Ser193. The substrate site is built by His197 and Trp204. Asn264 is a glycosylation site (N-linked (GlcNAc...) asparagine). 317 to 319 provides a ligand contact to 3'-phosphoadenylyl sulfate; that stretch reads MQY. An N-linked (GlcNAc...) asparagine glycan is attached at Asn320. 323–324 lines the 3'-phosphoadenylyl sulfate pocket; it reads RA. Positions 352-387 form a coiled coil; that stretch reads KDLFQQRYQYKRQLERREQRLRSREERLLHRAKEAL.

This sequence belongs to the sulfotransferase 6 family. Post-translationally, N-glycosylated. As to expression, expressed in fetal brain.

Its subcellular location is the membrane. The enzyme catalyses alpha-D-glucosaminyl-[heparan sulfate](n) + 3'-phosphoadenylyl sulfate = 6-sulfo-alpha-D-glucosaminyl-[heparan sulfate](n) + adenosine 3',5'-bisphosphate + H(+). Functionally, 6-O-sulfation enzyme which catalyzes the transfer of sulfate from 3'-phosphoadenosine 5'-phosphosulfate (PAPS) to position 6 of the N-sulfoglucosamine residue (GlcNS) of heparan sulfate. Critical for normal neuronal development where it may play a role in neuron branching. May also play a role in limb development. May prefer iduronic acid. The chain is Heparan-sulfate 6-O-sulfotransferase 1 from Homo sapiens (Human).